Here is a 339-residue protein sequence, read N- to C-terminus: Uroporphyrinogen decarboxylase (339 aa).

Substrate contacts are provided by residues Arg-21–Arg-25, Asp-71, Tyr-147, Ser-202, and His-315.

This sequence belongs to the uroporphyrinogen decarboxylase family. As to quaternary structure, homodimer.

The protein resides in the cytoplasm. It catalyses the reaction uroporphyrinogen III + 4 H(+) = coproporphyrinogen III + 4 CO2. The protein operates within porphyrin-containing compound metabolism; protoporphyrin-IX biosynthesis; coproporphyrinogen-III from 5-aminolevulinate: step 4/4. In terms of biological role, catalyzes the decarboxylation of four acetate groups of uroporphyrinogen-III to yield coproporphyrinogen-III. The polypeptide is Uroporphyrinogen decarboxylase (Helicobacter acinonychis (strain Sheeba)).